Consider the following 298-residue polypeptide: Succinate dehydrogenase [ubiquinone] iron-sulfur subunit, mitochondrial (298 aa).

One can recognise a 2Fe-2S ferredoxin-type domain in the interval 59 to 147 (YRFNPEAPGA…STKIYPLPHM (89 aa)). [2Fe-2S] cluster is bound by residues Cys107, Cys112, Cys115, and Cys127. Residues 190–220 (ERDRLDGLYECILCACCSTSCPSYWWNADKY) enclose the 4Fe-4S ferredoxin-type domain. 3 residues coordinate [4Fe-4S] cluster: Cys200, Cys203, and Cys206. A [3Fe-4S] cluster-binding site is contributed by Cys210. Trp215 contacts a ubiquinone. The [3Fe-4S] cluster site is built by Cys257 and Cys263. Cys267 serves as a coordination point for [4Fe-4S] cluster.

It belongs to the succinate dehydrogenase/fumarate reductase iron-sulfur protein family. Component of complex II composed of four subunits: a flavoprotein (FP), an iron-sulfur protein (IP), and a cytochrome b composed of a large and a small subunit. Requires [2Fe-2S] cluster as cofactor. [3Fe-4S] cluster is required as a cofactor. The cofactor is [4Fe-4S] cluster.

It localises to the mitochondrion inner membrane. The enzyme catalyses a quinone + succinate = fumarate + a quinol. It participates in carbohydrate metabolism; tricarboxylic acid cycle; fumarate from succinate (eukaryal route): step 1/1. Iron-sulfur protein (IP) subunit of succinate dehydrogenase (SDH) that is involved in complex II of the mitochondrial electron transport chain and is responsible for transferring electrons from succinate to ubiquinone (coenzyme Q). This chain is Succinate dehydrogenase [ubiquinone] iron-sulfur subunit, mitochondrial (sdhb-1), found in Caenorhabditis elegans.